A 268-amino-acid chain; its full sequence is MAVGKNKGLSKGGKKGGKKKVIDPFSRKDWYDVKAPNMFQTRQIGKTLVNRTQGQRIASDYLKGRVFEVSLADLQKDIDPERSFRKFRLIAEDVQDRNVLCNFHGMDLTTDKYRSMVKKWQTLIEAIVEAKTVDGYLLRVFCIGFTAKDQQSQRKTCYAQQSQVRKIRARMTDIINNEVSGADLKQLVNKLALDSIAKDIEKSCQRIYPLHDVYIRKVKVLKKPRFDISKLLELHGDGGGKTSEAVVSAEGAVVDRPEGYEPPVQEAV.

Residues 1–21 (MAVGKNKGLSKGGKKGGKKKV) form a disordered region.

This sequence belongs to the eukaryotic ribosomal protein eS1 family. Component of the small ribosomal subunit. Mature ribosomes consist of a small (40S) and a large (60S) subunit. The 40S subunit contains about 33 different proteins and 1 molecule of RNA (18S). The 60S subunit contains about 49 different proteins and 3 molecules of RNA (28S, 5.8S and 5S).

The protein localises to the cytoplasm. Essential for oogenesis; required for late follicle cell development. The polypeptide is Small ribosomal subunit protein eS1 (Drosophila willistoni (Fruit fly)).